The sequence spans 205 residues: Ribosome maturation factor RimP (205 aa).

The segment covering 1 to 12 (MSNAEAQASSDH) has biased composition (polar residues). Disordered stretches follow at residues 1–24 (MSNA…APAH) and 186–205 (FSHL…SEEA).

This sequence belongs to the RimP family.

It is found in the cytoplasm. Required for maturation of 30S ribosomal subunits. This chain is Ribosome maturation factor RimP, found in Pseudarthrobacter chlorophenolicus (strain ATCC 700700 / DSM 12829 / CIP 107037 / JCM 12360 / KCTC 9906 / NCIMB 13794 / A6) (Arthrobacter chlorophenolicus).